The primary structure comprises 125 residues: Basic leucine zipper transcriptional factor ATF-like (125 aa).

The span at 1-14 shows a compositional bias: low complexity; that stretch reads MPHSSDSSDSSFSR. Residues 1-58 form a disordered region; that stretch reads MPHSSDSSDSSFSRSPPPGKQDSSDDVRRVQRREKNRIAAQKSRQRQTQKADTLHLES. Positions 26 to 89 constitute a bZIP domain; the sequence is DVRRVQRREK…KYFTSVLNSH (64 aa). The interval 28-50 is basic motif; the sequence is RRVQRREKNRIAAQKSRQRQTQK. The residue at position 43 (Ser-43) is a Phosphoserine. Thr-48 carries the post-translational modification Phosphothreonine. The segment at 54–75 is leucine-zipper; sequence LHLESEDLEKQNAALRKEIKQL.

It belongs to the bZIP family. Heterodimer; mainly heterodimerizes with JUNB. The BATF-JUNB heterodimer interacts with IRF4 and IRF8. Interacts (via bZIP domain) with IRF4 and IRF8; the interaction is direct. Also forms heterodimers with JUN and JUND. Also interacts with IFI35. Post-translationally, phosphorylated on serine and threonine residues and at least one tyrosine residue. Phosphorylation at Ser-43 inhibit DNA binding activity and transforms it as a negative regulator of AP-1 mediated transcription. In terms of processing, phosphorylated. Expressed at highest levels in lung, and at lower levels in placenta, liver, kidney, spleen, and peripheral blood. Detected in SW480 colorectal cancer cell line and several hematopoietic tumor cell lines, including Raji Burkitt's lymphoma. Strongly expressed in mature B- and T-lymphocytes. Also expressed in moderate levels in lymph node and appendix and at low levels in thymus and bone marrow.

It localises to the nucleus. The protein localises to the cytoplasm. AP-1 family transcription factor that controls the differentiation of lineage-specific cells in the immune system: specifically mediates the differentiation of T-helper 17 cells (Th17), follicular T-helper cells (TfH), CD8(+) dendritic cells and class-switch recombination (CSR) in B-cells. Acts via the formation of a heterodimer with JUNB that recognizes and binds DNA sequence 5'-TGA[CG]TCA-3'. The BATF-JUNB heterodimer also forms a complex with IRF4 (or IRF8) in immune cells, leading to recognition of AICE sequence (5'-TGAnTCA/GAAA-3'), an immune-specific regulatory element, followed by cooperative binding of BATF and IRF4 (or IRF8) and activation of genes. Controls differentiation of T-helper cells producing interleukin-17 (Th17 cells) by binding to Th17-associated gene promoters: regulates expression of the transcription factor RORC itself and RORC target genes such as IL17 (IL17A or IL17B). Also involved in differentiation of follicular T-helper cells (TfH) by directing expression of BCL6 and MAF. In B-cells, involved in class-switch recombination (CSR) by controlling the expression of both AICDA and of germline transcripts of the intervening heavy-chain region and constant heavy-chain region (I(H)-C(H)). Following infection, can participate in CD8(+) dendritic cell differentiation via interaction with IRF4 and IRF8 to mediate cooperative gene activation. Regulates effector CD8(+) T-cell differentiation by regulating expression of SIRT1. Following DNA damage, part of a differentiation checkpoint that limits self-renewal of hematopoietic stem cells (HSCs): up-regulated by STAT3, leading to differentiation of HSCs, thereby restricting self-renewal of HSCs. The protein is Basic leucine zipper transcriptional factor ATF-like (BATF) of Homo sapiens (Human).